A 300-amino-acid polypeptide reads, in one-letter code: Acetyl-coenzyme A carboxylase carboxyl transferase subunit beta 2 (300 aa).

The CoA carboxyltransferase N-terminal domain occupies 26 to 294 (VWVKCPSCRE…SGAYSSEAVA (269 aa)). The Zn(2+) site is built by cysteine 30, cysteine 33, cysteine 49, and cysteine 51. The C4-type zinc-finger motif lies at 30–51 (CPSCRELIYHKQLAERMKVCRC).

It belongs to the AccD/PCCB family. Acetyl-CoA carboxylase is a heterohexamer composed of biotin carboxyl carrier protein (AccB), biotin carboxylase (AccC) and two subunits each of ACCase subunit alpha (AccA) and ACCase subunit beta (AccD). Zn(2+) serves as cofactor.

Its subcellular location is the cytoplasm. It carries out the reaction N(6)-carboxybiotinyl-L-lysyl-[protein] + acetyl-CoA = N(6)-biotinyl-L-lysyl-[protein] + malonyl-CoA. The protein operates within lipid metabolism; malonyl-CoA biosynthesis; malonyl-CoA from acetyl-CoA: step 1/1. Component of the acetyl coenzyme A carboxylase (ACC) complex. Biotin carboxylase (BC) catalyzes the carboxylation of biotin on its carrier protein (BCCP) and then the CO(2) group is transferred by the transcarboxylase to acetyl-CoA to form malonyl-CoA. The protein is Acetyl-coenzyme A carboxylase carboxyl transferase subunit beta 2 of Roseiflexus castenholzii (strain DSM 13941 / HLO8).